The chain runs to 190 residues: Lipid A acyltransferase PagP (190 aa).

The first 18 residues, 1-18, serve as a signal peptide directing secretion; that stretch reads MKRLISCLTIICALNASA. Catalysis depends on residues H60, D103, and S104.

It belongs to the lipid A palmitoyltransferase family. As to quaternary structure, homodimer.

Its subcellular location is the cell outer membrane. The catalysed reaction is a lipid A + a 1,2-diacyl-sn-glycero-3-phosphocholine = a hepta-acyl lipid A + a 2-acyl-sn-glycero-3-phosphocholine. The enzyme catalyses a lipid IVA + a 1,2-diacyl-sn-glycero-3-phosphocholine = a lipid IVB + a 2-acyl-sn-glycero-3-phosphocholine. It catalyses the reaction a lipid IIA + a 1,2-diacyl-sn-glycero-3-phosphocholine = a lipid IIB + a 2-acyl-sn-glycero-3-phosphocholine. Transfers a fatty acid residue from the sn-1 position of a phospholipid to the N-linked hydroxyfatty acid chain on the proximal unit of lipid A or its precursors. This chain is Lipid A acyltransferase PagP, found in Legionella pneumophila (strain Corby).